Consider the following 430-residue polypeptide: Tol-Pal system protein TolB (430 aa).

The N-terminal stretch at 1–21 is a signal peptide; it reads MRRFVTLLIALLCLSATAVQA.

Belongs to the TolB family. As to quaternary structure, the Tol-Pal system is composed of five core proteins: the inner membrane proteins TolA, TolQ and TolR, the periplasmic protein TolB and the outer membrane protein Pal. They form a network linking the inner and outer membranes and the peptidoglycan layer.

Its subcellular location is the periplasm. Its function is as follows. Part of the Tol-Pal system, which plays a role in outer membrane invagination during cell division and is important for maintaining outer membrane integrity. The protein is Tol-Pal system protein TolB of Syntrophotalea carbinolica (strain DSM 2380 / NBRC 103641 / GraBd1) (Pelobacter carbinolicus).